A 56-amino-acid chain; its full sequence is Ovomucoid (56 aa).

The 51-residue stretch at 6-56 (VDCSEYPKPACTLEYRPLCGSDSKTYANKCNFCNAVVESNGTLTLSHFGKC) folds into the Kazal-like domain. Intrachain disulfides connect C8-C38, C16-C35, and C24-C56. Residue N45 is glycosylated (N-linked (GlcNAc...) asparagine).

Its subcellular location is the secreted. This is Ovomucoid from Oreortyx pictus (Mountain quail).